Here is a 179-residue protein sequence, read N- to C-terminus: Large ribosomal subunit protein uL5 (179 aa).

This sequence belongs to the universal ribosomal protein uL5 family. In terms of assembly, part of the 50S ribosomal subunit; part of the 5S rRNA/L5/L18/L25 subcomplex. Contacts the 5S rRNA and the P site tRNA. Forms a bridge to the 30S subunit in the 70S ribosome.

In terms of biological role, this is one of the proteins that bind and probably mediate the attachment of the 5S RNA into the large ribosomal subunit, where it forms part of the central protuberance. In the 70S ribosome it contacts protein S13 of the 30S subunit (bridge B1b), connecting the 2 subunits; this bridge is implicated in subunit movement. Contacts the P site tRNA; the 5S rRNA and some of its associated proteins might help stabilize positioning of ribosome-bound tRNAs. In Photorhabdus laumondii subsp. laumondii (strain DSM 15139 / CIP 105565 / TT01) (Photorhabdus luminescens subsp. laumondii), this protein is Large ribosomal subunit protein uL5.